We begin with the raw amino-acid sequence, 693 residues long: DNA ligase (693 aa).

NAD(+) is bound by residues 35–39, 84–85, and Glu121; these read DAEYD and SI. The active-site N6-AMP-lysine intermediate is the Lys123. Positions 144, 180, 297, and 321 each coordinate NAD(+). Positions 418, 421, 436, and 442 each coordinate Zn(2+). The region spanning 601-690 is the BRCT domain; the sequence is PASGSVAGLT…EQSPINNKDG (90 aa).

It belongs to the NAD-dependent DNA ligase family. LigA subfamily. Mg(2+) serves as cofactor. Mn(2+) is required as a cofactor.

The enzyme catalyses NAD(+) + (deoxyribonucleotide)n-3'-hydroxyl + 5'-phospho-(deoxyribonucleotide)m = (deoxyribonucleotide)n+m + AMP + beta-nicotinamide D-nucleotide.. In terms of biological role, DNA ligase that catalyzes the formation of phosphodiester linkages between 5'-phosphoryl and 3'-hydroxyl groups in double-stranded DNA using NAD as a coenzyme and as the energy source for the reaction. It is essential for DNA replication and repair of damaged DNA. The protein is DNA ligase of Azoarcus sp. (strain BH72).